The following is a 315-amino-acid chain: Lipoyl synthase (315 aa).

[4Fe-4S] cluster-binding residues include cysteine 62, cysteine 67, cysteine 73, cysteine 88, cysteine 92, cysteine 95, and serine 302. Residues 73–291 form the Radical SAM core domain; it reads CFGHGTATFM…GELAKKLGFS (219 aa).

It belongs to the radical SAM superfamily. Lipoyl synthase family. Requires [4Fe-4S] cluster as cofactor.

The protein localises to the cytoplasm. It carries out the reaction [[Fe-S] cluster scaffold protein carrying a second [4Fe-4S](2+) cluster] + N(6)-octanoyl-L-lysyl-[protein] + 2 oxidized [2Fe-2S]-[ferredoxin] + 2 S-adenosyl-L-methionine + 4 H(+) = [[Fe-S] cluster scaffold protein] + N(6)-[(R)-dihydrolipoyl]-L-lysyl-[protein] + 4 Fe(3+) + 2 hydrogen sulfide + 2 5'-deoxyadenosine + 2 L-methionine + 2 reduced [2Fe-2S]-[ferredoxin]. Its pathway is protein modification; protein lipoylation via endogenous pathway; protein N(6)-(lipoyl)lysine from octanoyl-[acyl-carrier-protein]: step 2/2. Catalyzes the radical-mediated insertion of two sulfur atoms into the C-6 and C-8 positions of the octanoyl moiety bound to the lipoyl domains of lipoate-dependent enzymes, thereby converting the octanoylated domains into lipoylated derivatives. The sequence is that of Lipoyl synthase from Coxiella burnetii (strain CbuG_Q212) (Coxiella burnetii (strain Q212)).